The following is a 435-amino-acid chain: Serine--tRNA ligase (435 aa).

234–236 (TAE) contacts L-serine. Residue 265–267 (RRE) participates in ATP binding. E288 is a binding site for L-serine. Residue 352 to 355 (EISS) participates in ATP binding. Position 388 (S388) interacts with L-serine.

This sequence belongs to the class-II aminoacyl-tRNA synthetase family. Type-1 seryl-tRNA synthetase subfamily. In terms of assembly, homodimer. The tRNA molecule binds across the dimer.

Its subcellular location is the cytoplasm. The enzyme catalyses tRNA(Ser) + L-serine + ATP = L-seryl-tRNA(Ser) + AMP + diphosphate + H(+). It catalyses the reaction tRNA(Sec) + L-serine + ATP = L-seryl-tRNA(Sec) + AMP + diphosphate + H(+). The protein operates within aminoacyl-tRNA biosynthesis; selenocysteinyl-tRNA(Sec) biosynthesis; L-seryl-tRNA(Sec) from L-serine and tRNA(Sec): step 1/1. Functionally, catalyzes the attachment of serine to tRNA(Ser). Is also able to aminoacylate tRNA(Sec) with serine, to form the misacylated tRNA L-seryl-tRNA(Sec), which will be further converted into selenocysteinyl-tRNA(Sec). In Synechococcus sp. (strain JA-2-3B'a(2-13)) (Cyanobacteria bacterium Yellowstone B-Prime), this protein is Serine--tRNA ligase.